Consider the following 513-residue polypeptide: Maturase K (513 aa).

It belongs to the intron maturase 2 family. MatK subfamily.

It localises to the plastid. The protein localises to the chloroplast. Its function is as follows. Usually encoded in the trnK tRNA gene intron. Probably assists in splicing its own and other chloroplast group II introns. The protein is Maturase K of Phaseolus vulgaris (Kidney bean).